A 150-amino-acid polypeptide reads, in one-letter code: Large ribosomal subunit protein bL9 (150 aa).

This sequence belongs to the bacterial ribosomal protein bL9 family.

Functionally, binds to the 23S rRNA. In Alkalilimnicola ehrlichii (strain ATCC BAA-1101 / DSM 17681 / MLHE-1), this protein is Large ribosomal subunit protein bL9.